A 600-amino-acid polypeptide reads, in one-letter code: Brain-enriched guanylate kinase-associated protein (600 aa).

Met-1 bears the N-acetylmethionine mark. The residue at position 137 (Tyr-137) is a Phosphotyrosine. The tract at residues 192 to 222 (PGSLSSRMSDASARDLGYRDGVEKSGPRPPY) is disordered. Ser-200 is modified (phosphoserine). Basic and acidic residues predominate over residues 203 to 217 (SARDLGYRDGVEKSG). Phosphoserine is present on residues Ser-229 and Ser-246. A Phosphothreonine modification is found at Thr-249. At Ser-265 the chain carries Phosphoserine. Positions 298-317 (SSYSSFSATSEEKEHAQAGT) are disordered. Residue Ser-372 is modified to Phosphoserine. At Arg-380 the chain carries Asymmetric dimethylarginine. Residues Ser-463, Ser-473, Ser-483, Ser-485, Ser-508, Ser-510, and Ser-514 each carry the phosphoserine modification. The tract at residues 537–590 (GAGSSPEPEHGSRESLEPSSMEASPEMHPPTRLSPQQAFPRTGGSGLSRKDSLT) is disordered. A compositionally biased stretch (basic and acidic residues) spans 543–552 (EPEHGSRESL). A phosphoserine mark is found at Ser-560 and Ser-570.

As to quaternary structure, interacts with DLG4 and DLGAP1 and forms a ternary complex.

It localises to the cytoplasm. The protein localises to the membrane. Functionally, may sustain the structure of the postsynaptic density (PSD). The chain is Brain-enriched guanylate kinase-associated protein (Begain) from Mus musculus (Mouse).